We begin with the raw amino-acid sequence, 182 residues long: Adenine phosphoribosyltransferase (182 aa).

It belongs to the purine/pyrimidine phosphoribosyltransferase family. Homodimer.

The protein localises to the cytoplasm. It carries out the reaction AMP + diphosphate = 5-phospho-alpha-D-ribose 1-diphosphate + adenine. Its pathway is purine metabolism; AMP biosynthesis via salvage pathway; AMP from adenine: step 1/1. In terms of biological role, catalyzes a salvage reaction resulting in the formation of AMP, that is energically less costly than de novo synthesis. This is Adenine phosphoribosyltransferase from Saccharopolyspora erythraea (strain ATCC 11635 / DSM 40517 / JCM 4748 / NBRC 13426 / NCIMB 8594 / NRRL 2338).